The sequence spans 1083 residues: Voltage-gated inwardly rectifying potassium channel KCNH3 (1083 aa).

Residues 1–228 lie on the Cytoplasmic side of the membrane; sequence MPAMRGLLAP…HCGALRATWD (228 aa). Positions 18–90 constitute a PAS domain; the sequence is IATRFDGTHS…QQIRKALDEH (73 aa). The 53-residue stretch at 93–145 folds into the PAC domain; the sequence is FKAELILYRKSGLPFWCLLDVIPIKNEKGEVALFLVSHKDISETKNRGGPDRW. Positions 137-150 are enriched in basic and acidic residues; that stretch reads KNRGGPDRWKETGG. Residues 137–157 are disordered; sequence KNRGGPDRWKETGGGRRRYGR. A helical membrane pass occupies residues 229–249; that stretch reads GFILLATLYVAVTVPYSVCVS. At 250 to 259 the chain is on the extracellular side; sequence TAREPSAARG. Residues 260–280 form a helical membrane-spanning segment; it reads PPSVCDLAVEVLFILDIVLNF. Topologically, residues 281-302 are cytoplasmic; sequence RTTFVSKSGQVVFAPKSICLHY. Residues 303-323 traverse the membrane as a helical segment; that stretch reads VTTWFLLDVIAALPFDLLHAF. The Extracellular portion of the chain corresponds to 324–331; the sequence is KVNVYFGA. A helical; Voltage-sensor membrane pass occupies residues 332-352; it reads HLLKTVRLLRLLRLLPRLDRY. At 353–361 the chain is on the cytoplasmic side; that stretch reads SQYSAVVLT. The helical transmembrane segment at 362-382 threads the bilayer; sequence LLMAVFALLAHWVACVWFYIG. Residues 383-453 lie on the Extracellular side of the membrane; that stretch reads QREIESSESE…GGPSLRSAYI (71 aa). Asn421, Asn428, and Asn436 each carry an N-linked (GlcNAc...) asparagine glycan. The pore-forming intramembrane region spans 454 to 474; the sequence is TSLYFALSSLTSVGFGNVSAN. Residues 465–470 carry the Selectivity filter motif; that stretch reads SVGFGN. The Extracellular segment spans residues 475-479; that stretch reads TDTEK. A helical membrane pass occupies residues 480–500; it reads IFSICTMLIGALMHAVVFGNV. Topologically, residues 501-1083 are cytoplasmic; that stretch reads TAIIQRMYAR…QWTQEEGTGV (583 aa). 582–697 provides a ligand contact to a nucleoside 3',5'-cyclic phosphate; sequence LFEAASRGCL…FAPRFSRGLR (116 aa). Disordered stretches follow at residues 729–810, 832–873, and 972–1055; these read EEKE…LRLP, CGSD…SEAR, and MAPW…ALPW. The segment covering 773 to 785 has biased composition (basic residues); it reads TAPRPRLGGRGRP. Over residues 844 to 861 the composition is skewed to low complexity; that stretch reads GQSGPECSSSPSPGPESG.

Belongs to the potassium channel family. H (Eag) (TC 1.A.1.20) subfamily. Kv12.2/KCNH3 sub-subfamily. In terms of assembly, the potassium channel is probably composed of a homo- or heterotetrameric complex of pore-forming alpha subunits that can associate with modulating beta subunits. Interacts with KCNE1 and KCNE3; these interactions regulate KCNH3 trafficking to the plasma membrane and its subsequent voltage-gated potassium channel activity. In terms of processing, N-glycosylated. N-glycosylation mediates traffick to the cell membrane but is not necessary for voltage-gated potassium channel activity. As to expression, detected only in brain, in particular in the telencephalon. Detected in the cerebral cortex, occipital pole, frontal and temporal lobe, putamen, amygdala, hippocampus and caudate nucleus.

It is found in the cell membrane. The catalysed reaction is K(+)(in) = K(+)(out). Functionally, pore-forming (alpha) subunit of a voltage-gated inwardly rectifying potassium channel. Charactherized by a fast rate of activation during depolarization followed by a rapid inactivation at much more depolarized value causing inward rectification due to a C-type inactivation mechanism. Exhibits a rapid recovery from inactivation. The sequence is that of Voltage-gated inwardly rectifying potassium channel KCNH3 from Homo sapiens (Human).